A 582-amino-acid chain; its full sequence is Guanine nucleotide-binding protein-like NSN1 (582 aa).

The span at Met-1–Arg-46 shows a compositional bias: basic residues. The interval Met-1–Pro-58 is disordered. The interval Val-2–Lys-49 is basic. Short sequence motifs (nuclear localization signal) lie at residues Ser-5–Arg-12, Leu-22–His-29, and Val-69–Glu-76. Residues Leu-15–Leu-94 are a coiled coil. In terms of domain architecture, CP-type G spans Tyr-127 to Leu-311. A DARXP motif motif is present at residues Asp-145–Pro-149. The G4 stretch occupies residues Asn-175–Asp-178. Asn-175–Asp-178 provides a ligand contact to GTP. The G5 stretch occupies residues Lys-202–Ser-204. The tract at residues Gly-260 to Ser-267 is G1. Position 263 to 268 (Asn-263 to Ser-268) interacts with GTP. The interval Val-281–Ser-456 is intermediate. Residues Gly-286–Ser-290 form a G2 region. Residues Asp-304–Gly-307 and Gly-307 contribute to the GTP site. A G3 region spans residues Asp-304–Gly-307. Positions Asp-463–Asp-551 are acidic. The segment at Asp-469–Leu-545 is disordered. The segment covering Glu-476 to Glu-496 has biased composition (acidic residues). The segment covering Ala-497–Thr-506 has biased composition (basic and acidic residues). Positions Ala-515 to Lys-537 form a coiled coil. Positions Thr-522–Lys-529 match the Nuclear localization signal 4 motif. Residues Lys-523–Lys-537 are compositionally biased toward basic residues.

This sequence belongs to the TRAFAC class YlqF/YawG GTPase family. In terms of assembly, interacts with EBP2 and PES. As to expression, mostly expressed in flowers, siliques and inflorescence apex, and, to a lower extent, in stems and leaves.

Its subcellular location is the nucleus. The protein localises to the nucleolus. Functionally, involved in the differentiation of epidermal cells, probably via the regulation of the expression of meristem-related genes (e.g. CLV3, STM, KNAT1, CUC2 and AG) and of leaf polarity-related genes (e.g. YAB5, FIL, AS2, PHB and PHV). May play a role in regulating cellular proliferation. Necessary for flower development, probably by preventing apical dominance through the down-regulation of AG expression. Required for embryogenesis, leaf and cotyledon development, as well as for leaf polarity establishment. Plays an important role in plant growth and senescence by modulating ribosome biogenesis in nucleolus. Possesses GTPAse activity in vitro. Possesses RNA binding activity in vitro. Associates with ribosomes. The sequence is that of Guanine nucleotide-binding protein-like NSN1 from Arabidopsis thaliana (Mouse-ear cress).